Here is a 581-residue protein sequence, read N- to C-terminus: Bifunctional lycopene cyclase/phytoene synthase (581 aa).

The tract at residues 1–243 (MGFDYALVHL…IVFGQLAFDN (243 aa)) is lycopene beta-cyclase. 7 helical membrane passes run 3-23 (FDYA…LTLL), 35-55 (KVAF…SYLI), 65-85 (HVII…FFVV), 120-140 (LKRL…WFCV), 152-172 (ILIW…QFII), 173-193 (GLPF…LWIV), and 221-241 (IEEA…QLAF). The tract at residues 250–581 (AFPHLFPDPS…RVLVAWRTLN (332 aa)) is phytoene synthase.

The protein in the N-terminal section; belongs to the lycopene beta-cyclase family. It in the C-terminal section; belongs to the phytoene/squalene synthase family.

The protein localises to the membrane. It catalyses the reaction all-trans-lycopene = gamma-carotene. The enzyme catalyses gamma-carotene = all-trans-beta-carotene. It carries out the reaction 2 (2E,6E,10E)-geranylgeranyl diphosphate = 15-cis-phytoene + 2 diphosphate. It participates in carotenoid biosynthesis; beta-carotene biosynthesis. The protein operates within carotenoid biosynthesis; phytoene biosynthesis; all-trans-phytoene from geranylgeranyl diphosphate: step 1/1. In terms of biological role, bifunctional enzyme that catalyzes the reactions from geranylgeranyl diphosphate to phytoene (phytoene synthase) and lycopene to beta-carotene via the intermediate gamma-carotene (lycopene cyclase). The sequence is that of Bifunctional lycopene cyclase/phytoene synthase from Leptosphaeria maculans (strain JN3 / isolate v23.1.3 / race Av1-4-5-6-7-8) (Blackleg fungus).